The chain runs to 821 residues: Glycerol-3-phosphate acyltransferase (821 aa).

The HXXXXD motif signature appears at 310–315; it reads CHRSHM.

It belongs to the GPAT/DAPAT family.

The protein resides in the cell membrane. It catalyses the reaction sn-glycerol 3-phosphate + an acyl-CoA = a 1-acyl-sn-glycero-3-phosphate + CoA. The protein operates within phospholipid metabolism; CDP-diacylglycerol biosynthesis; CDP-diacylglycerol from sn-glycerol 3-phosphate: step 1/3. The sequence is that of Glycerol-3-phosphate acyltransferase from Baumannia cicadellinicola subsp. Homalodisca coagulata.